Consider the following 364-residue polypeptide: tRNA 2-selenouridine synthase (364 aa).

In terms of domain architecture, Rhodanese spans 14-137; sequence LIADTPIIDV…LRQTAIQATI (124 aa). Cysteine 97 acts as the S-selanylcysteine intermediate in catalysis.

Belongs to the SelU family. As to quaternary structure, monomer.

The catalysed reaction is 5-methylaminomethyl-2-thiouridine(34) in tRNA + selenophosphate + (2E)-geranyl diphosphate + H2O + H(+) = 5-methylaminomethyl-2-selenouridine(34) in tRNA + (2E)-thiogeraniol + phosphate + diphosphate. It carries out the reaction 5-methylaminomethyl-2-thiouridine(34) in tRNA + (2E)-geranyl diphosphate = 5-methylaminomethyl-S-(2E)-geranyl-thiouridine(34) in tRNA + diphosphate. The enzyme catalyses 5-methylaminomethyl-S-(2E)-geranyl-thiouridine(34) in tRNA + selenophosphate + H(+) = 5-methylaminomethyl-2-(Se-phospho)selenouridine(34) in tRNA + (2E)-thiogeraniol. It catalyses the reaction 5-methylaminomethyl-2-(Se-phospho)selenouridine(34) in tRNA + H2O = 5-methylaminomethyl-2-selenouridine(34) in tRNA + phosphate. In terms of biological role, involved in the post-transcriptional modification of the uridine at the wobble position (U34) of tRNA(Lys), tRNA(Glu) and tRNA(Gln). Catalyzes the conversion of 2-thiouridine (S2U-RNA) to 2-selenouridine (Se2U-RNA). Acts in a two-step process involving geranylation of 2-thiouridine (S2U) to S-geranyl-2-thiouridine (geS2U) and subsequent selenation of the latter derivative to 2-selenouridine (Se2U) in the tRNA chain. In Escherichia coli O127:H6 (strain E2348/69 / EPEC), this protein is tRNA 2-selenouridine synthase.